The primary structure comprises 701 residues: Glycine--tRNA ligase beta subunit (701 aa).

This sequence belongs to the class-II aminoacyl-tRNA synthetase family. Tetramer of two alpha and two beta subunits.

It localises to the cytoplasm. It carries out the reaction tRNA(Gly) + glycine + ATP = glycyl-tRNA(Gly) + AMP + diphosphate. This chain is Glycine--tRNA ligase beta subunit, found in Nitratidesulfovibrio vulgaris (strain DSM 19637 / Miyazaki F) (Desulfovibrio vulgaris).